A 333-amino-acid chain; its full sequence is Trans-1,2-dihydrobenzene-1,2-diol dehydrogenase (333 aa).

The protein belongs to the Gfo/Idh/MocA family. As to quaternary structure, homodimer.

The catalysed reaction is (1R,2R)-1,2-dihydrobenzene-1,2-diol + NADP(+) = catechol + NADPH + H(+). The enzyme catalyses D-xylose + NADP(+) = D-xylono-1,5-lactone + NADPH + H(+). In Mus musculus (Mouse), this protein is Trans-1,2-dihydrobenzene-1,2-diol dehydrogenase (Dhdh).